The following is a 629-amino-acid chain: Kelch-like protein 13 (629 aa).

The BTB domain maps to 66–135 (CDVTLVPGDG…IYTAKLSLNM (70 aa)). One can recognise a BACK domain in the interval 170 to 271 (CVEVGRIANT…TPQDLINYVQ (102 aa)). Kelch repeat units follow at residues 315-363 (HLVT…VIGN), 364-415 (FLYV…ALKG), 416-462 (HLYA…VYGG), 464-509 (MYIS…TVGD), 511-561 (LYVI…VFEN), and 562-610 (KIYV…TLTV).

As to quaternary structure, component of the BCR(KLHL9-KLHL13) E3 ubiquitin ligase complex, at least composed of CUL3, KLHL9, KLHL13 and RBX1. Interacts with AURKB.

It functions in the pathway protein modification; protein ubiquitination. In terms of biological role, substrate-specific adapter of a BCR (BTB-CUL3-RBX1) E3 ubiquitin-protein ligase complex required for mitotic progression and cytokinesis. The BCR(KLHL9-KLHL13) E3 ubiquitin ligase complex mediates the ubiquitination of AURKB and controls the dynamic behavior of AURKB on mitotic chromosomes and thereby coordinates faithful mitotic progression and completion of cytokinesis. This Gallus gallus (Chicken) protein is Kelch-like protein 13 (KLHL13).